We begin with the raw amino-acid sequence, 436 residues long: Acetyl-CoA decarbonylase/synthase complex subunit delta 2 (436 aa).

It belongs to the CdhD family. In terms of assembly, heterodimer of delta and gamma chains. The ACDS complex is made up of alpha, epsilon, beta, gamma and delta chains with a probable stoichiometry of (alpha(2)epsilon(2))(4)-beta(8)-(gamma(1)delta(1))(8) (Potential).

It participates in one-carbon metabolism; methanogenesis from acetate. Functionally, part of a complex that catalyzes the reversible cleavage of acetyl-CoA, allowing growth on acetate as sole source of carbon and energy. Probably maintains the overall quaternary structure of the ACDS complex. This Methanosarcina acetivorans (strain ATCC 35395 / DSM 2834 / JCM 12185 / C2A) protein is Acetyl-CoA decarbonylase/synthase complex subunit delta 2 (cdhD2).